A 446-amino-acid chain; its full sequence is ATP synthase subunit b-delta (446 aa).

An ATP synthase subunit b region spans residues 1–168; the sequence is MSTFIGQLVG…PKGADVEYPL (168 aa). Residues 4–24 form a helical membrane-spanning segment; that stretch reads FIGQLVGFAAIVYLVWWYVVP. The interval 169–446 is ATP synthase subunit delta; it reads LAKMRSASRR…LVAAEAALPD (278 aa).

The protein in the N-terminal section; belongs to the ATPase B chain family. It in the C-terminal section; belongs to the ATPase delta chain family. In terms of assembly, F-type ATPases have 2 components, F(1) - the catalytic core - and F(0) - the membrane proton channel. F(1) has five subunits: alpha(3), beta(3), gamma(1), delta(1), epsilon(1). F(0) has three main subunits: a(1), b(2) and c(10-14). The alpha and beta chains form an alternating ring which encloses part of the gamma chain. F(1) is attached to F(0) by a central stalk formed by the gamma and epsilon chains, while a peripheral stalk is formed by the delta and b chains.

It is found in the cell membrane. Functionally, f(1)F(0) ATP synthase produces ATP from ADP in the presence of a proton or sodium gradient. F-type ATPases consist of two structural domains, F(1) containing the extramembraneous catalytic core and F(0) containing the membrane proton channel, linked together by a central stalk and a peripheral stalk. During catalysis, ATP synthesis in the catalytic domain of F(1) is coupled via a rotary mechanism of the central stalk subunits to proton translocation. In terms of biological role, this fusion protein includes a component of the F(0) channel (subunit b) and of the F(1) subunit (subunit delta). Two copies of subunit b and one of delta together form the peripheral 'stator' stalk which links F(1) to F(0). This Mycobacterium leprae (strain Br4923) protein is ATP synthase subunit b-delta (atpFH).